A 614-amino-acid chain; its full sequence is Beta-glucosidase 33 (614 aa).

An N-terminal signal peptide occupies residues 1–26; the sequence is MATATLTLFLGLLALTSTILSFNADA. Residues glutamine 113, histidine 217, and 262 to 263 each bind a beta-D-glucoside; that span reads NE. The active-site Proton donor is the glutamate 263. Cysteine 282 and cysteine 290 are joined by a disulfide. Residue asparagine 344 is glycosylated (N-linked (GlcNAc...) asparagine). Tyrosine 407 serves as a coordination point for a beta-D-glucoside. Residues asparagine 419, asparagine 432, and asparagine 439 are each glycosylated (N-linked (GlcNAc...) asparagine). Glutamate 479 contacts a beta-D-glucoside. The Nucleophile role is filled by glutamate 479. Residue asparagine 491 is glycosylated (N-linked (GlcNAc...) asparagine). A beta-D-glucoside contacts are provided by residues tryptophan 529, 536-537, and phenylalanine 545; that span reads EW.

The protein belongs to the glycosyl hydrolase 1 family.

The catalysed reaction is Hydrolysis of terminal, non-reducing beta-D-glucosyl residues with release of beta-D-glucose.. In Arabidopsis thaliana (Mouse-ear cress), this protein is Beta-glucosidase 33.